The primary structure comprises 301 residues: NADH-ubiquinone oxidoreductase chain 1 (301 aa).

Helical transmembrane passes span 4 to 24 (IIPILLAVAFLTLLERKVLGY), 62 to 82 (LALFIIAPTLALTLALMMWIP), 96 to 116 (ILFMLALSSLAVYAILWSGWA), 140 to 160 (LAIIILSILLMNGSFTLSTLI), 165 to 185 (YTWLIMPSWPLAMMWFISTIA), 216 to 236 (LFFLAEYANIIMMNALTIILF), 247 to 267 (EMYTANFMLKALLFTTFFLWI), and 279 to 299 (LMHLLWKNFLPLTLVMCMWHV).

Belongs to the complex I subunit 1 family.

Its subcellular location is the mitochondrion inner membrane. The enzyme catalyses a ubiquinone + NADH + 5 H(+)(in) = a ubiquinol + NAD(+) + 4 H(+)(out). In terms of biological role, core subunit of the mitochondrial membrane respiratory chain NADH dehydrogenase (Complex I) that is believed to belong to the minimal assembly required for catalysis. Complex I functions in the transfer of electrons from NADH to the respiratory chain. The immediate electron acceptor for the enzyme is believed to be ubiquinone. The polypeptide is NADH-ubiquinone oxidoreductase chain 1 (MT-ND1) (Nyctalus noctula (Noctule bat)).